The sequence spans 260 residues: Late transcription factor 1 (260 aa).

Belongs to the chordopoxvirinae VLTF-1 family. In terms of assembly, interacts with the late transcription factors VLTF-2 and VLTF-3. Interacts with the late transcription elongation factor H5/VLTF-4. Interacts with itself.

Associates with RNA polymerase to initiate transcription from late gene promoters. The chain is Late transcription factor 1 (VLTF1) from Vertebrata (FPV).